A 195-amino-acid chain; its full sequence is Imidazoleglycerol-phosphate dehydratase (195 aa).

This sequence belongs to the imidazoleglycerol-phosphate dehydratase family.

It localises to the cytoplasm. The enzyme catalyses D-erythro-1-(imidazol-4-yl)glycerol 3-phosphate = 3-(imidazol-4-yl)-2-oxopropyl phosphate + H2O. It participates in amino-acid biosynthesis; L-histidine biosynthesis; L-histidine from 5-phospho-alpha-D-ribose 1-diphosphate: step 6/9. This Dechloromonas aromatica (strain RCB) protein is Imidazoleglycerol-phosphate dehydratase.